Here is a 443-residue protein sequence, read N- to C-terminus: Ribulose bisphosphate carboxylase large chain (443 aa).

Substrate is bound by residues asparagine 89 and threonine 139. Residue lysine 141 is the Proton acceptor of the active site. Lysine 143 provides a ligand contact to substrate. Positions 167, 169, and 170 each coordinate Mg(2+). Lysine 167 is subject to N6-carboxylysine. Histidine 260 serves as the catalytic Proton acceptor. Substrate-binding residues include arginine 261, histidine 293, and serine 345.

It belongs to the RuBisCO large chain family. Type I subfamily. As to quaternary structure, heterohexadecamer of 8 large chains and 8 small chains; disulfide-linked. The disulfide link is formed within the large subunit homodimers. Mg(2+) serves as cofactor. Post-translationally, the disulfide bond which can form in the large chain dimeric partners within the hexadecamer appears to be associated with oxidative stress and protein turnover.

It is found in the plastid. The protein localises to the chloroplast. It carries out the reaction 2 (2R)-3-phosphoglycerate + 2 H(+) = D-ribulose 1,5-bisphosphate + CO2 + H2O. The enzyme catalyses D-ribulose 1,5-bisphosphate + O2 = 2-phosphoglycolate + (2R)-3-phosphoglycerate + 2 H(+). Its function is as follows. RuBisCO catalyzes two reactions: the carboxylation of D-ribulose 1,5-bisphosphate, the primary event in carbon dioxide fixation, as well as the oxidative fragmentation of the pentose substrate in the photorespiration process. Both reactions occur simultaneously and in competition at the same active site. This is Ribulose bisphosphate carboxylase large chain from Buddleja davidii (Butterfly bush).